Reading from the N-terminus, the 386-residue chain is Formate-dependent phosphoribosylglycinamide formyltransferase (386 aa).

N(1)-(5-phospho-beta-D-ribosyl)glycinamide is bound by residues 15 to 16 (EL) and Glu75. ATP-binding positions include Arg107, Lys148, 153-158 (SSGKGQ), 188-191 (EQFI), and Glu196. Residues 112–301 (ALAVQQLNLQ…EFELHLRAIV (190 aa)) form the ATP-grasp domain. 2 residues coordinate Mg(2+): Glu260 and Glu272. N(1)-(5-phospho-beta-D-ribosyl)glycinamide-binding positions include Asp279, Lys349, and 356 to 357 (RR).

It belongs to the PurK/PurT family. Homodimer.

It catalyses the reaction N(1)-(5-phospho-beta-D-ribosyl)glycinamide + formate + ATP = N(2)-formyl-N(1)-(5-phospho-beta-D-ribosyl)glycinamide + ADP + phosphate + H(+). Its pathway is purine metabolism; IMP biosynthesis via de novo pathway; N(2)-formyl-N(1)-(5-phospho-D-ribosyl)glycinamide from N(1)-(5-phospho-D-ribosyl)glycinamide (formate route): step 1/1. Involved in the de novo purine biosynthesis. Catalyzes the transfer of formate to 5-phospho-ribosyl-glycinamide (GAR), producing 5-phospho-ribosyl-N-formylglycinamide (FGAR). Formate is provided by PurU via hydrolysis of 10-formyl-tetrahydrofolate. In Francisella tularensis subsp. holarctica (strain LVS), this protein is Formate-dependent phosphoribosylglycinamide formyltransferase.